Here is an 80-residue protein sequence, read N- to C-terminus: MITKNYLIDKIHDKLNCLSKEDVKDSVDLILDYLNESLKKQKRIEIRNFGNFSIRKRKFPESEKFYNTVYYRMPKNLFKE.

It belongs to the bacterial histone-like protein family.

Histone-like DNA-binding protein which is capable of wrapping DNA to stabilize it, and thus to prevent its denaturation under extreme environmental conditions. The chain is DNA-binding protein HU-like from Rickettsia conorii (strain ATCC VR-613 / Malish 7).